The chain runs to 333 residues: UDP-3-O-acylglucosamine N-acyltransferase (333 aa).

The active-site Proton acceptor is His225.

The protein belongs to the transferase hexapeptide repeat family. LpxD subfamily. As to quaternary structure, homotrimer.

The catalysed reaction is a UDP-3-O-[(3R)-3-hydroxyacyl]-alpha-D-glucosamine + a (3R)-hydroxyacyl-[ACP] = a UDP-2-N,3-O-bis[(3R)-3-hydroxyacyl]-alpha-D-glucosamine + holo-[ACP] + H(+). Its pathway is bacterial outer membrane biogenesis; LPS lipid A biosynthesis. Catalyzes the N-acylation of UDP-3-O-acylglucosamine using 3-hydroxyacyl-ACP as the acyl donor. Is involved in the biosynthesis of lipid A, a phosphorylated glycolipid that anchors the lipopolysaccharide to the outer membrane of the cell. This is UDP-3-O-acylglucosamine N-acyltransferase from Paracidovorax citrulli (strain AAC00-1) (Acidovorax citrulli).